Here is a 148-residue protein sequence, read N- to C-terminus: MTETPFWQRKTLDEMSDAEWESLCDGCGQCCLHKLMDEDTDEIYFTNVACRQLNIKTCQCRNYERRFEYEPDCIKLTRENLPTFEWLPPTCAYRLLAEGKNLPLWHPLRTGSKAAMHAERISVRHIAVKESEVRDWQDHILNKPDWAE.

The protein belongs to the UPF0260 family.

The protein is UPF0260 protein ESA_01462 of Cronobacter sakazakii (strain ATCC BAA-894) (Enterobacter sakazakii).